Consider the following 139-residue polypeptide: ATP synthase epsilon chain (139 aa).

Belongs to the ATPase epsilon chain family. As to quaternary structure, F-type ATPases have 2 components, CF(1) - the catalytic core - and CF(0) - the membrane proton channel. CF(1) has five subunits: alpha(3), beta(3), gamma(1), delta(1), epsilon(1). CF(0) has three main subunits: a, b and c.

It is found in the cell inner membrane. Produces ATP from ADP in the presence of a proton gradient across the membrane. This Escherichia coli O139:H28 (strain E24377A / ETEC) protein is ATP synthase epsilon chain.